The following is a 133-amino-acid chain: Large-conductance mechanosensitive channel (133 aa).

3 helical membrane passes run 8–28, 30–50, and 73–93; these read FAMK…GAFG, IVTS…LGGI, and GQFI…FLFI.

The protein belongs to the MscL family. Homopentamer.

It is found in the cell membrane. In terms of biological role, channel that opens in response to stretch forces in the membrane lipid bilayer. May participate in the regulation of osmotic pressure changes within the cell. The protein is Large-conductance mechanosensitive channel of Hathewaya histolytica (Clostridium histolyticum).